The primary structure comprises 206 residues: Phosphoserine phosphatase (206 aa).

The Nucleophile role is filled by D7. Mg(2+) contacts are provided by D7 and D9. The Proton donor role is filled by D9. Substrate-binding positions include E16, R52, 95-96, and K140; that span reads SG. D163 provides a ligand contact to Mg(2+). Residue N166 coordinates substrate.

This sequence belongs to the HAD-like hydrolase superfamily. SerB family. The cofactor is Mg(2+).

The catalysed reaction is O-phospho-L-serine + H2O = L-serine + phosphate. The enzyme catalyses O-phospho-D-serine + H2O = D-serine + phosphate. The protein operates within amino-acid biosynthesis; L-serine biosynthesis; L-serine from 3-phospho-D-glycerate: step 3/3. The polypeptide is Phosphoserine phosphatase (Wolinella succinogenes (strain ATCC 29543 / DSM 1740 / CCUG 13145 / JCM 31913 / LMG 7466 / NCTC 11488 / FDC 602W) (Vibrio succinogenes)).